Here is a 434-residue protein sequence, read N- to C-terminus: MAQFDLTRINCQYLDRHLTFPLLEFLCGKEIYNQQELLEYILETVNKTNMIDYTMDTRKRLNLSQEMPEELVQRKAEVLATLKQLQNEVAPIMKATDILKNGESMKDSKTFVNALQKDYNFKVEHLESAYKLAKYLYECGNYQESTSYLYFCLIVMSPNDKNYLNVLWGKLAAEILTLNWNTALEDLTRLRDYIDSANFSTIQALQQRTWLIHWSVLVFFNHPKGRDLIIEMFLYKPLYLNAIQTMCPHIMRYLATAVVINRTRRNALKDLIKVIQQESYTYRDPITEFLECLYVNFDFEGARLKLHECQTVILNDFFIVACLNEFVEDARLMIFETFCRIHQCITISMLADKLNMKPNEAECWIVNLIRNARLNAKIDSKLGHVVMGTQPLSPYQQLVEKIDSLSMRSEHLAGLIERKSKQKNQESIDSWKYY.

The region spanning 219 to 392 is the PCI domain; that stretch reads FFNHPKGRDL…GHVVMGTQPL (174 aa).

The protein belongs to the eIF-3 subunit E family. Component of the eukaryotic translation initiation factor 3 (eIF-3) complex. The eIF-3 complex interacts with pix. Interacts with mxt.

The protein resides in the cytoplasm. Functionally, component of the eukaryotic translation initiation factor 3 (eIF-3) complex, which is involved in protein synthesis of a specialized repertoire of mRNAs and, together with other initiation factors, stimulates binding of mRNA and methionyl-tRNAi to the 40S ribosome. The eIF-3 complex specifically targets and initiates translation of a subset of mRNAs involved in cell proliferation. The protein is Eukaryotic translation initiation factor 3 subunit E (eIF3-S6) of Drosophila ananassae (Fruit fly).